Here is a 162-residue protein sequence, read N- to C-terminus: 2-C-methyl-D-erythritol 2,4-cyclodiphosphate synthase (162 aa).

Residues aspartate 12 and histidine 14 each contribute to the a divalent metal cation site. Residues 12-14 (DVH) and 38-39 (HS) contribute to the 4-CDP-2-C-methyl-D-erythritol 2-phosphate site. Residue histidine 46 coordinates a divalent metal cation. Residues 60 to 62 (DIG), 65 to 69 (FPDTD), and arginine 146 each bind 4-CDP-2-C-methyl-D-erythritol 2-phosphate.

Belongs to the IspF family. As to quaternary structure, homotrimer. The cofactor is a divalent metal cation.

It carries out the reaction 4-CDP-2-C-methyl-D-erythritol 2-phosphate = 2-C-methyl-D-erythritol 2,4-cyclic diphosphate + CMP. The protein operates within isoprenoid biosynthesis; isopentenyl diphosphate biosynthesis via DXP pathway; isopentenyl diphosphate from 1-deoxy-D-xylulose 5-phosphate: step 4/6. Its function is as follows. Involved in the biosynthesis of isopentenyl diphosphate (IPP) and dimethylallyl diphosphate (DMAPP), two major building blocks of isoprenoid compounds. Catalyzes the conversion of 4-diphosphocytidyl-2-C-methyl-D-erythritol 2-phosphate (CDP-ME2P) to 2-C-methyl-D-erythritol 2,4-cyclodiphosphate (ME-CPP) with a corresponding release of cytidine 5-monophosphate (CMP). The chain is 2-C-methyl-D-erythritol 2,4-cyclodiphosphate synthase from Bordetella petrii (strain ATCC BAA-461 / DSM 12804 / CCUG 43448).